Here is a 215-residue protein sequence, read N- to C-terminus: Glycerol-3-phosphate acyltransferase (215 aa).

A run of 6 helical transmembrane segments spans residues 3–23, 42–61, 68–90, 110–130, 134–154, and 162–182; these read LILL…LWIG, TNTF…LIDI, TLLP…FAVL, AGVL…VFVL, LFSM…ISVL, and LLPG…AIII.

Belongs to the PlsY family. As to quaternary structure, probably interacts with PlsX.

It is found in the cell membrane. The enzyme catalyses an acyl phosphate + sn-glycerol 3-phosphate = a 1-acyl-sn-glycero-3-phosphate + phosphate. It functions in the pathway lipid metabolism; phospholipid metabolism. Its function is as follows. Catalyzes the transfer of an acyl group from acyl-phosphate (acyl-PO(4)) to glycerol-3-phosphate (G3P) to form lysophosphatidic acid (LPA). This enzyme utilizes acyl-phosphate as fatty acyl donor, but not acyl-CoA or acyl-ACP. The polypeptide is Glycerol-3-phosphate acyltransferase (Streptococcus equi subsp. zooepidemicus (strain MGCS10565)).